Consider the following 56-residue polypeptide: Small ribosomal subunit protein uS14 (56 aa).

Cysteine 21, cysteine 24, cysteine 39, and cysteine 42 together coordinate Zn(2+).

The protein belongs to the universal ribosomal protein uS14 family. Zn(2+) serves as cofactor.

This is Small ribosomal subunit protein uS14 (RPS29) from Triticum aestivum (Wheat).